Reading from the N-terminus, the 533-residue chain is Tyrosine-protein kinase transforming protein Fps (533 aa).

The interval 1–46 is disordered; sequence ASGQLHRPQPQEHTSTSAAAGTWRHTQASESRHRLPHCSAAPSHQD. Over residues 11 to 29 the composition is skewed to polar residues; it reads QEHTSTSAAAGTWRHTQAS. Residues 50–124 form the F-BAR; degenerate domain; that stretch reads MGFGPELWCP…LQEDRQSVCS (75 aa). In terms of domain architecture, SH2 spans 171-260; that stretch reads WYHGAIPRSE…KSGIVLTRAV (90 aa). The Protein kinase domain maps to 272–525; it reads VLLGERIGRG…PSFGAVHQDL (254 aa). Residues 278 to 286 and lysine 301 each bind ATP; that span reads IGRGNFGEV. The active-site Proton acceptor is aspartate 394. Residue tyrosine 424 is modified to Phosphotyrosine; by autocatalysis.

It belongs to the protein kinase superfamily. Tyr protein kinase family. Fes/fps subfamily.

The catalysed reaction is L-tyrosyl-[protein] + ATP = O-phospho-L-tyrosyl-[protein] + ADP + H(+). The polypeptide is Tyrosine-protein kinase transforming protein Fps (V-FPS) (Gallus gallus (Chicken)).